A 267-amino-acid polypeptide reads, in one-letter code: Indole-3-glycerol phosphate synthase (267 aa).

It belongs to the TrpC family.

The enzyme catalyses 1-(2-carboxyphenylamino)-1-deoxy-D-ribulose 5-phosphate + H(+) = (1S,2R)-1-C-(indol-3-yl)glycerol 3-phosphate + CO2 + H2O. It participates in amino-acid biosynthesis; L-tryptophan biosynthesis; L-tryptophan from chorismate: step 4/5. This is Indole-3-glycerol phosphate synthase from Cupriavidus pinatubonensis (strain JMP 134 / LMG 1197) (Cupriavidus necator (strain JMP 134)).